The primary structure comprises 192 residues: Ribosomal RNA small subunit methyltransferase G (192 aa).

S-adenosyl-L-methionine-binding positions include Gly-63, Phe-68, 112–113, and Arg-125; that span reads IE.

This sequence belongs to the methyltransferase superfamily. RNA methyltransferase RsmG family.

It localises to the cytoplasm. It carries out the reaction guanosine(527) in 16S rRNA + S-adenosyl-L-methionine = N(7)-methylguanosine(527) in 16S rRNA + S-adenosyl-L-homocysteine. In terms of biological role, specifically methylates the N7 position of guanine in position 527 of 16S rRNA. This is Ribosomal RNA small subunit methyltransferase G from Rickettsia bellii (strain OSU 85-389).